The chain runs to 399 residues: Glutamine synthetase 1, mitochondrial (399 aa).

The N-terminal 27 residues, 1 to 27 (MALRVAGLFLKKELVAPATQQLRLLRT), are a transit peptide targeting the mitochondrion. The region spanning 62-143 (VQATYLWIDG…VLCDTYSADG (82 aa)) is the GS beta-grasp domain. The region spanning 150 to 399 (KRAAFQAAID…AIVRTCLLNE (250 aa)) is the GS catalytic domain.

This sequence belongs to the glutamine synthetase family. As to quaternary structure, homooctamer.

The protein localises to the mitochondrion. It catalyses the reaction L-glutamate + NH4(+) + ATP = L-glutamine + ADP + phosphate + H(+). The chain is Glutamine synthetase 1, mitochondrial (Gs1) from Drosophila melanogaster (Fruit fly).